We begin with the raw amino-acid sequence, 206 residues long: Protein GrpE (206 aa).

This sequence belongs to the GrpE family. Homodimer.

It is found in the cytoplasm. Functionally, participates actively in the response to hyperosmotic and heat shock by preventing the aggregation of stress-denatured proteins, in association with DnaK and GrpE. It is the nucleotide exchange factor for DnaK and may function as a thermosensor. Unfolded proteins bind initially to DnaJ; upon interaction with the DnaJ-bound protein, DnaK hydrolyzes its bound ATP, resulting in the formation of a stable complex. GrpE releases ADP from DnaK; ATP binding to DnaK triggers the release of the substrate protein, thus completing the reaction cycle. Several rounds of ATP-dependent interactions between DnaJ, DnaK and GrpE are required for fully efficient folding. The sequence is that of Protein GrpE from Shewanella sp. (strain W3-18-1).